The chain runs to 485 residues: 28S rRNA (uridine-N(3))-methyltransferase (485 aa).

The S-adenosyl-L-methionine site is built by arginine 296, glycine 318, and asparagine 347.

It belongs to the class IV-like SAM-binding methyltransferase superfamily.

Its subcellular location is the nucleus. It carries out the reaction uridine in 28S rRNA + S-adenosyl-L-methionine = N(3)-methyluridine in 28S rRNA + S-adenosyl-L-homocysteine + H(+). In terms of biological role, S-adenosyl-L-methionine-dependent methyltransferase that specifically methylates the uridine in position 3485 of 28S rRNA. The chain is 28S rRNA (uridine-N(3))-methyltransferase from Drosophila melanogaster (Fruit fly).